Here is a 132-residue protein sequence, read N- to C-terminus: UPF0299 membrane protein Ent638_2744 (132 aa).

The next 4 helical transmembrane spans lie at 8-28 (VWQY…GIFI), 31-51 (LLPI…LLLA), 63-83 (GCFV…VGVM), and 93-113 (FGPI…VVSW).

It belongs to the UPF0299 family.

It localises to the cell inner membrane. In Enterobacter sp. (strain 638), this protein is UPF0299 membrane protein Ent638_2744.